The primary structure comprises 274 residues: MQHTSSDTLSENSIKLLQITDTHLFASDEGSLLSVKTLQSFQAVVEQVMARHVEFDYLLATGDISQDHSAASYQRFADGIAPLEKACFWLPGNHDYKPNMSSVLPSPQITTPEQVELNAHWQLILLDSQVVGVPHGRLSDQQLLMLEHHLQASPEKNTLILLHHHPLLVGSAWLDQHTLKDAEAFWQIVERFPMVKGIVCGHVHQDMNVMHKGIRVMATPSTCVQFKPKSDDFALDTVSPGWRELTLHANGEITTQVQRLASGSFLPDFTSSGY.

7 residues coordinate Fe cation: D21, H23, D63, N93, H163, H202, and H204. Residues H23, D63, and 93–94 (NH) contribute to the AMP site. AMP is bound at residue H204.

It belongs to the cyclic nucleotide phosphodiesterase class-III family. Fe(2+) is required as a cofactor.

The enzyme catalyses 3',5'-cyclic AMP + H2O = AMP + H(+). In terms of biological role, hydrolyzes cAMP to 5'-AMP. Plays an important regulatory role in modulating the intracellular concentration of cAMP, thereby influencing cAMP-dependent processes. In Vibrio vulnificus (strain CMCP6), this protein is 3',5'-cyclic adenosine monophosphate phosphodiesterase CpdA.